The following is a 376-amino-acid chain: Mitogen-activated protein kinase 6 (376 aa).

The Protein kinase domain maps to 43–329 (APPIRPIGRG…VDEALHHPYL (287 aa)). ATP contacts are provided by residues 49-57 (IGRGAYGIV) and Lys72. Residue Asp169 is the Proton acceptor of the active site. Phosphothreonine is present on Thr201. Positions 201-203 (TEY) match the TXY motif. Residue Tyr203 is modified to Phosphotyrosine.

Belongs to the protein kinase superfamily. CMGC Ser/Thr protein kinase family. MAP kinase subfamily. In terms of processing, dually phosphorylated on Thr-201 and Tyr-203, which activates the enzyme.

The enzyme catalyses L-seryl-[protein] + ATP = O-phospho-L-seryl-[protein] + ADP + H(+). It carries out the reaction L-threonyl-[protein] + ATP = O-phospho-L-threonyl-[protein] + ADP + H(+). Activated by threonine and tyrosine phosphorylation. This is Mitogen-activated protein kinase 6 (MPK6) from Oryza sativa subsp. japonica (Rice).